We begin with the raw amino-acid sequence, 289 residues long: ATP synthase gamma chain (289 aa).

This sequence belongs to the ATPase gamma chain family. As to quaternary structure, F-type ATPases have 2 components, CF(1) - the catalytic core - and CF(0) - the membrane proton channel. CF(1) has five subunits: alpha(3), beta(3), gamma(1), delta(1), epsilon(1). CF(0) has three main subunits: a, b and c.

The protein localises to the cell inner membrane. Functionally, produces ATP from ADP in the presence of a proton gradient across the membrane. The gamma chain is believed to be important in regulating ATPase activity and the flow of protons through the CF(0) complex. The sequence is that of ATP synthase gamma chain from Haemophilus influenzae (strain PittEE).